We begin with the raw amino-acid sequence, 420 residues long: Transcription factor bHLH89 (420 aa).

Residues 196–216 form a disordered region; sequence EENNNLDDGLNRKGRGSKKRK. The segment covering 207–216 has biased composition (basic residues); the sequence is RKGRGSKKRK. One can recognise a bHLH domain in the interval 212-261; that stretch reads SKKRKIFPTERERRVHFKDRFGDLKNLIPNPTKNDRASIVGEAIDYIKEL.

Homodimer. Flowers.

The protein localises to the nucleus. The chain is Transcription factor bHLH89 (BHLH89) from Arabidopsis thaliana (Mouse-ear cress).